The chain runs to 975 residues: MVENISLNVTVKSSARKNQQQSPALSVKKRAQKSQDFDFQFNVDKPKVKAIVVRRRAPPSKVEPTNSSVPNTTKSPTPSVSSSKSAISTLSASPKANASNDDLMFNVSPTKPPVKSVLGDDFMLNVTTKPVVAQKAKPKITRAERLGKKQRQGKPLTKLSEEQITRALKSNKKPKNPNQLPTPGDLFRAQLEEERRQKRREEGGGDQEASADEEDAKNNSGGGSPRVKPSSAVKESKKSSDIEDSGESGEESATSDEEPDESSAQSPGQEKEPKQTAKKPPKAEETSSTNRFRTKKIGLFDQSDVEALKQLGQRAVKPVKETIFTGSKISTLGLHPHAVKNLEDLLSIRELTSVQQKTIPEVLQGKDVLVRSQTGSGKTLAYALPLVELLQKQQPRIQRKDGVLALVIVPTRELVMQTYELIQKLVKPYTWIVPGSLLGGESRKSEKARLRKGINILIGTPGRLVDHLLHTASFKLTKLQFLILDEADRLLELGYERDVKQLVEAIDKQRAECEDKELPQLQRMLLSATLTSQVQQLAGLTLKNPLYIDNSDEAASAALKSKDGYQKETIEALLEVDDGLGEYQEDVTGVLSIPENLQLSYVVVPPKLRLVALSSLLAKEVDASPKQFKAIVFMSTTEMVNFHHDMLNEALTRRVLDEEDEQEKGDSDDDGDIPLLQGLRFFKLHGSMTQTERQGVFRGFRDCASCVLLATDVVGRGIDVPDIKLVVQYTPPQTTADFVHRVGRTARAGRKGRAVLFLTPSEAQFVRHLEKKRIRIQQGDMYAYLQTLLPKDDEARTVQEAASNLQHKFQTLLEDDRELHDKSCKAFVSWMKFYSTFPKELKPIFNVRIAHMGHFAKSFALKEAPSKFAAKHAAPKAAPPTNRLTYTERDPEKIQAQKRAKRRFTTTVSGEVRQLQQRDVGAQKPGAPPPKGGFIGGGVGRSSFMKSLGKSRALNMSEFDSGLPPEGAAKRRKQA.

A compositionally biased stretch (polar residues) spans 1-24 (MVENISLNVTVKSSARKNQQQSPA). Disordered regions lie at residues 1-38 (MVEN…QDFD), 50-104 (AIVV…DDLM), and 127-295 (TTKP…FRTK). Over residues 64–94 (PTNSSVPNTTKSPTPSVSSSKSAISTLSASP) the composition is skewed to low complexity. Ser75 and Ser99 each carry phosphoserine. The segment covering 190–203 (QLEEERRQKRREEG) has biased composition (basic and acidic residues). Phosphoserine is present on residues Ser210, Ser220, and Ser224. Residues 242–261 (IEDSGESGEESATSDEEPDE) show a composition bias toward acidic residues. The segment covering 269-285 (QEKEPKQTAKKPPKAEE) has biased composition (basic and acidic residues). Residues 327–356 (SKISTLGLHPHAVKNLEDLLSIRELTSVQQ) carry the Q motif motif. In terms of domain architecture, Helicase ATP-binding spans 359 to 548 (IPEVLQGKDV…GLTLKNPLYI (190 aa)). 372–379 (SQTGSGKT) is a binding site for ATP. Residues 485-488 (DEAD) carry the DEAD box motif. One can recognise a Helicase C-terminal domain in the interval 616-789 (LLAKEVDASP…DMYAYLQTLL (174 aa)). Ser667 carries the phosphoserine modification. Disordered stretches follow at residues 915–942 (LQQR…VGRS) and 955–975 (NMSE…RKQA).

The protein belongs to the DEAD box helicase family. DDX31/DBP7 subfamily.

It carries out the reaction ATP + H2O = ADP + phosphate + H(+). In terms of biological role, probable ATP-dependent RNA helicase. This is Probable ATP-dependent RNA helicase CG8611 from Drosophila melanogaster (Fruit fly).